The following is a 211-amino-acid chain: Cytochrome c biogenesis ATP-binding export protein CcmA (211 aa).

The region spanning 17–209 (LDVEDVTVFR…PSLAHVESFW (193 aa)) is the ABC transporter domain. 49–56 (GPNGAGKS) is an ATP binding site.

This sequence belongs to the ABC transporter superfamily. CcmA exporter (TC 3.A.1.107) family. In terms of assembly, the complex is composed of two ATP-binding proteins (CcmA) and two transmembrane proteins (CcmB).

It is found in the cell inner membrane. The enzyme catalyses heme b(in) + ATP + H2O = heme b(out) + ADP + phosphate + H(+). Its function is as follows. Part of the ABC transporter complex CcmAB involved in the biogenesis of c-type cytochromes; once thought to export heme, this seems not to be the case, but its exact role is uncertain. Responsible for energy coupling to the transport system. In Gluconobacter oxydans (strain 621H) (Gluconobacter suboxydans), this protein is Cytochrome c biogenesis ATP-binding export protein CcmA.